The following is a 720-amino-acid chain: Iron-sulfur clusters transporter ATM1, mitochondrial (720 aa).

Residues 1 to 36 (MIMFRSLSVTPVWKAGLSLSHRSIPINSRLSSVRNY) constitute a mitochondrion transit peptide. Over 37-129 (ISIGCANKTG…PSGDNKVKIR (93 aa)) the chain is Mitochondrial matrix. Polar residues predominate over residues 64 to 77 (RFNSSSNGNGTDKN). The interval 64 to 102 (RFNSSSNGNGTDKNASVAPKTEVKKIVPPKPSTNGKSKT) is disordered. Residues 130–151 (VLIALALLIGAKLLNVQVPFFF) form a helical membrane-spanning segment. An ABC transmembrane type-1 domain is found at 130–421 (VLIALALLIG…LGSVYRELKQ (292 aa)). Residues 152–175 (KQTIDSMNIEWGPDVATVLPVAIT) lie on the Mitochondrial intermembrane side of the membrane. Residues 176 to 199 (MTILSYGAARFGAVMFGELRNAVF) form a helical membrane-spanning segment. The Mitochondrial matrix portion of the chain corresponds to 200–248 (AKVAQNAIRKVSLQTFQHLMKLDLGWHLSRQTGGLTRAMDRGTKGISYV). A helical transmembrane segment spans residues 249-272 (LSAMVFHMIPITFEISVVCGILTY). Q273 is a topological domain (mitochondrial intermembrane). The chain crosses the membrane as a helical span at residues 274–294 (FGSSFAAMTFVTMLLYSFFTF). The Mitochondrial matrix portion of the chain corresponds to 295-360 (KTTAWRTEFR…SQIKVAQSLA (66 aa)). Glutathione-binding positions include 300 to 304 (RTEFR) and 363 to 366 (NAGQ). A helical membrane pass occupies residues 361-379 (FLNAGQNFIFTSALTAMMY). Topologically, residues 380-394 (MGASGVMEGALTVGD) are mitochondrial intermembrane. Residues 395–416 (LVLINQLVFQLSVPLNFLGSVY) form a helical membrane-spanning segment. G413 serves as a coordination point for glutathione. Topologically, residues 417–720 (RELKQSLIDM…EKEPRTSKKD (304 aa)) are mitochondrial matrix. Residues 456-692 (IKFENVTFGY…PNSLYSELWN (237 aa)) form the ABC transporter domain. ATP-binding positions include Y465 and 489 to 500 (GPSGSGKSTILR).

This sequence belongs to the ABC transporter superfamily. ABCB family. Heavy Metal importer (TC 3.A.1.210) subfamily. Homodimer.

The protein resides in the mitochondrion inner membrane. Performs an essential function in the generation of cytoplasmic iron-sulfur proteins by mediating the ATP-dependent export of Fe/S cluster precursors synthesized by NFS1 and other mitochondrial proteins. Hydrolyzes ATP. Binds glutathione and may function by transporting a glutathione-conjugated iron-sulfur compound. This Kluyveromyces lactis (strain ATCC 8585 / CBS 2359 / DSM 70799 / NBRC 1267 / NRRL Y-1140 / WM37) (Yeast) protein is Iron-sulfur clusters transporter ATM1, mitochondrial.